The following is a 308-amino-acid chain: Cytochrome c biogenesis protein CcsA (308 aa).

Helical transmembrane passes span 2 to 22 (IVST…SILI), 44 to 64 (GMLV…IYLG), 71 to 91 (LSES…IAYF), 143 to 163 (MILG…LMVI), 212 to 232 (VIGL…VWAN), 239 to 259 (WSWD…AIYL), and 273 to 293 (AIVA…VNLV).

Belongs to the CcmF/CycK/Ccl1/NrfE/CcsA family. May interact with Ccs1.

It localises to the plastid membrane. Required during biogenesis of c-type cytochromes (cytochrome c6 and cytochrome f) at the step of heme attachment. The chain is Cytochrome c biogenesis protein CcsA from Cuscuta exaltata (Tall dodder).